The following is a 269-amino-acid chain: ParA family protein MG470 (269 aa).

It belongs to the ParA family.

This chain is ParA family protein MG470, found in Mycoplasma genitalium (strain ATCC 33530 / DSM 19775 / NCTC 10195 / G37) (Mycoplasmoides genitalium).